The chain runs to 370 residues: Cobalt-precorrin-5B C(1)-methyltransferase (370 aa).

Belongs to the CbiD family.

It carries out the reaction Co-precorrin-5B + S-adenosyl-L-methionine = Co-precorrin-6A + S-adenosyl-L-homocysteine. It functions in the pathway cofactor biosynthesis; adenosylcobalamin biosynthesis; cob(II)yrinate a,c-diamide from sirohydrochlorin (anaerobic route): step 6/10. In terms of biological role, catalyzes the methylation of C-1 in cobalt-precorrin-5B to form cobalt-precorrin-6A. The sequence is that of Cobalt-precorrin-5B C(1)-methyltransferase from Pseudomonas syringae pv. tomato (strain ATCC BAA-871 / DC3000).